The following is a 179-amino-acid chain: Large ribosomal subunit protein uL5 (179 aa).

Belongs to the universal ribosomal protein uL5 family. Part of the 50S ribosomal subunit; part of the 5S rRNA/L5/L18/L25 subcomplex. Contacts the 5S rRNA and the P site tRNA. Forms a bridge to the 30S subunit in the 70S ribosome.

Functionally, this is one of the proteins that bind and probably mediate the attachment of the 5S RNA into the large ribosomal subunit, where it forms part of the central protuberance. In the 70S ribosome it contacts protein S13 of the 30S subunit (bridge B1b), connecting the 2 subunits; this bridge is implicated in subunit movement. Contacts the P site tRNA; the 5S rRNA and some of its associated proteins might help stabilize positioning of ribosome-bound tRNAs. This is Large ribosomal subunit protein uL5 from Francisella tularensis subsp. tularensis (strain SCHU S4 / Schu 4).